Reading from the N-terminus, the 232-residue chain is T-cell surface glycoprotein CD1b-3 (232 aa).

Residues 1-201 are Extracellular-facing; it reads GLQEFQFEYP…LYWGHPMYIG (201 aa). 3 disulfide bridges follow: Cys19-Cys83, Cys48-Cys62, and Cys123-Cys178. An N-linked (GlcNAc...) asparagine glycan is attached at Asn45. Residues 84–194 form the Ig-like domain; it reads PRYLLGVLDA…LGDQDIILYW (111 aa). The helical transmembrane segment at 202–222 threads the bilayer; the sequence is LIFVAIIVPSLILLICLALWF. At 223–232 the chain is on the cytoplasmic side; the sequence is WRRWSYQTVL.

As to quaternary structure, heterodimer with B2M (beta-2-microglobulin). Interacts with saposin C.

The protein resides in the cell membrane. The protein localises to the endosome membrane. It is found in the lysosome membrane. Its function is as follows. Antigen-presenting protein that binds self and non-self lipid and glycolipid antigens and presents them to T-cell receptors on natural killer T-cells. The protein is T-cell surface glycoprotein CD1b-3 of Ovis aries (Sheep).